Reading from the N-terminus, the 352-residue chain is Histidinol-phosphate aminotransferase (352 aa).

Lys221 bears the N6-(pyridoxal phosphate)lysine mark.

This sequence belongs to the class-II pyridoxal-phosphate-dependent aminotransferase family. Histidinol-phosphate aminotransferase subfamily. As to quaternary structure, homodimer. Pyridoxal 5'-phosphate serves as cofactor.

It carries out the reaction L-histidinol phosphate + 2-oxoglutarate = 3-(imidazol-4-yl)-2-oxopropyl phosphate + L-glutamate. It participates in amino-acid biosynthesis; L-histidine biosynthesis; L-histidine from 5-phospho-alpha-D-ribose 1-diphosphate: step 7/9. The chain is Histidinol-phosphate aminotransferase from Staphylococcus aureus (strain bovine RF122 / ET3-1).